Reading from the N-terminus, the 319-residue chain is Methionyl-tRNA formyltransferase (319 aa).

112-115 (SLLP) contacts (6S)-5,6,7,8-tetrahydrofolate.

Belongs to the Fmt family.

The catalysed reaction is L-methionyl-tRNA(fMet) + (6R)-10-formyltetrahydrofolate = N-formyl-L-methionyl-tRNA(fMet) + (6S)-5,6,7,8-tetrahydrofolate + H(+). Functionally, attaches a formyl group to the free amino group of methionyl-tRNA(fMet). The formyl group appears to play a dual role in the initiator identity of N-formylmethionyl-tRNA by promoting its recognition by IF2 and preventing the misappropriation of this tRNA by the elongation apparatus. In Pelobacter propionicus (strain DSM 2379 / NBRC 103807 / OttBd1), this protein is Methionyl-tRNA formyltransferase.